We begin with the raw amino-acid sequence, 204 residues long: dITP/XTP pyrophosphatase (204 aa).

Threonine 14 to lysine 19 contacts substrate. Positions 46 and 75 each coordinate Mg(2+). Aspartate 75 serves as the catalytic Proton acceptor. Residues serine 76, phenylalanine 161–aspartate 164, lysine 184, and histidine 189–arginine 190 contribute to the substrate site.

The protein belongs to the HAM1 NTPase family. Homodimer. Requires Mg(2+) as cofactor.

It catalyses the reaction XTP + H2O = XMP + diphosphate + H(+). The enzyme catalyses dITP + H2O = dIMP + diphosphate + H(+). The catalysed reaction is ITP + H2O = IMP + diphosphate + H(+). In terms of biological role, pyrophosphatase that catalyzes the hydrolysis of nucleoside triphosphates to their monophosphate derivatives, with a high preference for the non-canonical purine nucleotides XTP (xanthosine triphosphate), dITP (deoxyinosine triphosphate) and ITP. Seems to function as a house-cleaning enzyme that removes non-canonical purine nucleotides from the nucleotide pool, thus preventing their incorporation into DNA/RNA and avoiding chromosomal lesions. The sequence is that of dITP/XTP pyrophosphatase from Ruegeria pomeroyi (strain ATCC 700808 / DSM 15171 / DSS-3) (Silicibacter pomeroyi).